Reading from the N-terminus, the 118-residue chain is Large ribosomal subunit protein bL20 (118 aa).

This sequence belongs to the bacterial ribosomal protein bL20 family. In terms of assembly, part of the 50S ribosomal subunit. Contacts proteins L13 and L21.

Binds directly to 23S rRNA, probably serving to organize its structure. The protein is Large ribosomal subunit protein bL20 (rplT) of Deinococcus radiodurans (strain ATCC 13939 / DSM 20539 / JCM 16871 / CCUG 27074 / LMG 4051 / NBRC 15346 / NCIMB 9279 / VKM B-1422 / R1).